The primary structure comprises 521 residues: Phosphoethanolamine transferase EptA (521 aa).

6 consecutive transmembrane segments (helical) span residues 18–38 (AGLL…FVYV), 47–67 (FIAM…LALG), 79–99 (IVFS…KVFL), 118–138 (FLSV…GYVI), 150–170 (APFL…LANT), and 182–202 (FIGG…VSAL).

It belongs to the phosphoethanolamine transferase family. EptA subfamily.

Its subcellular location is the cell inner membrane. Its pathway is bacterial outer membrane biogenesis; LPS lipid A biosynthesis. Probably catalyzes the addition of a phosphoethanolamine moiety to the dephosphorylated 1-position of the disaccharide backbone of lipid A. Lipid A that is 1-phosphorylated is not a substrate for this enzyme. This is Phosphoethanolamine transferase EptA from Helicobacter pylori (strain ATCC 700392 / 26695) (Campylobacter pylori).